Here is a 373-residue protein sequence, read N- to C-terminus: Glutamine synthetase (373 aa).

Alanine 2 is subject to N-acetylalanine. Positions 2 to 25 are required for glutamine-induced ubiquitination by CRL4(CRBN) and proteasomal degradation; sequence ATSASSHLNKGIKQMYMSLPQGEK. Lysine 11 and lysine 14 each carry N6-acetyllysine. One can recognise a GS beta-grasp domain in the interval 24 to 106; sequence EKVQAMYIWV…VLCEVFKYNR (83 aa). Residue tyrosine 104 is modified to Phosphotyrosine. Residues 113–373 enclose the GS catalytic domain; sequence LRHICKRIMD…TGDEPFQYKN (261 aa). Glutamate 134 contacts ATP. Residues glutamate 134, glutamate 136, glutamate 196, and glutamate 203 each coordinate Mn(2+). Residue 203–208 coordinates ATP; it reads EFQIGP. Residue 246–247 coordinates L-glutamate; the sequence is NW. Histidine 253 lines the Mn(2+) pocket. Residues 255–257, arginine 319, and arginine 324 each bind ATP; that span reads NFS. Arginine 319 contacts L-glutamate. 336-338 contributes to the ADP binding site; that stretch reads YFE. Glutamate 338 contacts Mn(2+). Arginine 340 contacts L-glutamate. Serine 343 carries the phosphoserine modification.

Belongs to the glutamine synthetase family. As to quaternary structure, decamer; composed of two pentamers. Interacts with PALMD. Interacts with RHOJ. Interacts with BEST2; this interaction tethers a fraction of GLUL to the membrane, causing a decrease of cytosolic glutamine synthase (GS) activity and inhibits the chloride channel activity of BEST2 by affecting the gating at the aperture in the absence of intracellular glutamate. Requires Mg(2+) as cofactor. Mn(2+) serves as cofactor. Post-translationally, acetylated by EP300/p300; acetylation is stimulated by increased glutamine levels and promotes ubiquitin-mediated proteasomal degradation. In terms of processing, palmitoylated; undergoes autopalmitoylation. Ubiquitinated by ZNRF1. Ubiquitinated by the DCX (DDB1-CUL4-X-box) E3 ubiquitin-protein ligase complex called CRL4(CRBN), leading to proteasomal degradation. Expressed in microvascular endothelial cells.

The protein localises to the cytoplasm. Its subcellular location is the cytosol. It is found in the microsome. It localises to the mitochondrion. The protein resides in the cell membrane. The catalysed reaction is L-glutamate + NH4(+) + ATP = L-glutamine + ADP + phosphate + H(+). It catalyses the reaction L-cysteinyl-[protein] + hexadecanoyl-CoA = S-hexadecanoyl-L-cysteinyl-[protein] + CoA. Glutamine synthetase activity is inhibited by methionine sulfoximine (MSO). Functionally, glutamine synthetase that catalyzes the ATP-dependent conversion of glutamate and ammonia to glutamine. Its role depends on tissue localization: in the brain, it regulates the levels of toxic ammonia and converts neurotoxic glutamate to harmless glutamine, whereas in the liver, it is one of the enzymes responsible for the removal of ammonia. Plays a key role in ammonium detoxification during erythropoiesis: the glutamine synthetase activity is required to remove ammonium generated by porphobilinogen deaminase (HMBS) during heme biosynthesis to prevent ammonium accumulation and oxidative stress. Essential for proliferation of fetal skin fibroblasts. Independently of its glutamine synthetase activity, required for endothelial cell migration during vascular development. Involved in angiogenesis by regulating membrane localization and activation of the GTPase RHOJ, possibly by promoting RHOJ palmitoylation. May act as a palmitoyltransferase for RHOJ: able to autopalmitoylate and then transfer the palmitoyl group to RHOJ. Plays a role in ribosomal 40S subunit biogenesis. Through the interaction with BEST2, inhibits BEST2 channel activity by affecting the gating at the aperture in the absence of intracellular L-glutamate, but sensitizes BEST2 to intracellular L-glutamate, which promotes the opening of BEST2 and thus relieves its inhibitory effect on BEST2. The chain is Glutamine synthetase from Mus musculus (Mouse).